We begin with the raw amino-acid sequence, 421 residues long: Diaminopimelate decarboxylase (421 aa).

Position 62 is an N6-(pyridoxal phosphate)lysine (Lys-62). Residues Gly-237 and Glu-279–Arg-282 each bind pyridoxal 5'-phosphate. Substrate-binding residues include Arg-282, Arg-319, and Tyr-323. Residue Cys-349 is the Proton donor of the active site. Residues Glu-350 and Tyr-379 each coordinate substrate. Position 379 (Tyr-379) interacts with pyridoxal 5'-phosphate.

The protein belongs to the Orn/Lys/Arg decarboxylase class-II family. LysA subfamily. Homodimer. Pyridoxal 5'-phosphate is required as a cofactor.

The catalysed reaction is meso-2,6-diaminopimelate + H(+) = L-lysine + CO2. The protein operates within amino-acid biosynthesis; L-lysine biosynthesis via DAP pathway; L-lysine from DL-2,6-diaminopimelate: step 1/1. Functionally, specifically catalyzes the decarboxylation of meso-diaminopimelate (meso-DAP) to L-lysine. Plays a role in beta-lactam antibiotic resistance. This Staphylococcus aureus (strain COL) protein is Diaminopimelate decarboxylase (lysA).